We begin with the raw amino-acid sequence, 1362 residues long: Mediator of RNA polymerase II transcription subunit 12 (1362 aa).

Positions 31-51 (LRPPDDIHPLVDPARIGDSVY) are disordered.

It belongs to the Mediator complex subunit 12 family. In terms of assembly, component of the SRB8-11 complex, which itself associates with the Mediator complex.

The protein localises to the nucleus. Component of the SRB8-11 complex. The SRB8-11 complex is a regulatory module of the Mediator complex which is itself involved in regulation of basal and activated RNA polymerase II-dependent transcription. The SRB8-11 complex may be involved in the transcriptional repression of a subset of genes regulated by Mediator. It may inhibit the association of the Mediator complex with RNA polymerase II to form the holoenzyme complex. The protein is Mediator of RNA polymerase II transcription subunit 12 (SRB8) of Yarrowia lipolytica (strain CLIB 122 / E 150) (Yeast).